The chain runs to 121 residues: MAKSSFKQEHDLEKRRAEAARIREKYPDRIPVIVEKAEKSDIPTIDKKKYLVPADLTVGQFVYVIRKRIKLSAEKAIFIFVDNVLPPAGALMSSVYEEKKDDDGFLYVTYSGENTFGFGSP.

Residue G117 is the site of Phosphatidylethanolamine amidated glycine attachment. Residues 118–121 (FGSP) constitute a propeptide, removed in mature form.

This sequence belongs to the ATG8 family. In terms of assembly, interacts with ATG4. Interacts with NBR1. Interacts with ATI1 and ATI2. Interacts with SH3P2. In terms of processing, the C-terminal 4 residues are removed by ATG4 to expose Gly-117 at the C-terminus. This Gly-117 forms then a thioester bond with the 'Cys-558' of ATG7 (E1-like activating enzyme) before being transferred to the 'Cys-258' of ATG3 (the specific E2 conjugating enzyme), in order to be finally amidated with phosphatidylethanolamine. This lipid modification anchors ATG8 to autophagosomes. Constitutively expressed.

It localises to the cytoplasmic vesicle. The protein resides in the autophagosome membrane. Its subcellular location is the vacuole membrane. It is found in the cytoplasm. The protein localises to the cytoskeleton. Functionally, ubiquitin-like modifier involved in autophagosomes formation. May mediate the delivery of the autophagosomes to the vacuole via the microtubule cytoskeleton. The chain is Autophagy-related protein 8f (ATG8F) from Arabidopsis thaliana (Mouse-ear cress).